Consider the following 442-residue polypeptide: uncharacterized protein (442 aa).

A run of 7 helical transmembrane segments spans residues 209 to 229 (FNIW…AYFY), 247 to 267 (IFFL…HTFS), 284 to 304 (VGIS…AFVC), 308 to 328 (LRFI…YTPW), 342 to 362 (IFFF…MFYI), 374 to 394 (PVFK…LHIP), and 402 to 422 (FDII…GVAF).

The protein localises to the membrane. This is an uncharacterized protein from Schizosaccharomyces pombe (strain 972 / ATCC 24843) (Fission yeast).